A 360-amino-acid polypeptide reads, in one-letter code: Glutamate 5-kinase (360 aa).

Lysine 11 lines the ATP pocket. The substrate site is built by serine 51, aspartate 138, and asparagine 150. The PUA domain maps to 278–356; sequence KGEIHINECA…GKKPVVHYDY (79 aa).

This sequence belongs to the glutamate 5-kinase family.

Its subcellular location is the cytoplasm. It carries out the reaction L-glutamate + ATP = L-glutamyl 5-phosphate + ADP. It functions in the pathway amino-acid biosynthesis; L-proline biosynthesis; L-glutamate 5-semialdehyde from L-glutamate: step 1/2. In terms of biological role, catalyzes the transfer of a phosphate group to glutamate to form L-glutamate 5-phosphate. The sequence is that of Glutamate 5-kinase from Bacteroides thetaiotaomicron (strain ATCC 29148 / DSM 2079 / JCM 5827 / CCUG 10774 / NCTC 10582 / VPI-5482 / E50).